We begin with the raw amino-acid sequence, 204 residues long: NADH-quinone oxidoreductase subunit C (204 aa).

Belongs to the complex I 30 kDa subunit family. In terms of assembly, NDH-1 is composed of 14 different subunits. Subunits NuoB, C, D, E, F, and G constitute the peripheral sector of the complex.

The protein localises to the cell inner membrane. The enzyme catalyses a quinone + NADH + 5 H(+)(in) = a quinol + NAD(+) + 4 H(+)(out). Functionally, NDH-1 shuttles electrons from NADH, via FMN and iron-sulfur (Fe-S) centers, to quinones in the respiratory chain. The immediate electron acceptor for the enzyme in this species is believed to be ubiquinone. Couples the redox reaction to proton translocation (for every two electrons transferred, four hydrogen ions are translocated across the cytoplasmic membrane), and thus conserves the redox energy in a proton gradient. The polypeptide is NADH-quinone oxidoreductase subunit C (Polaromonas naphthalenivorans (strain CJ2)).